Here is a 339-residue protein sequence, read N- to C-terminus: Ketol-acid reductoisomerase (NADP(+)) (339 aa).

One can recognise a KARI N-terminal Rossmann domain in the interval Met-1–Thr-182. NADP(+) contacts are provided by residues Tyr-24–Gln-27, Arg-48, Ser-51, Ser-53, and Asp-83–Gln-86. His-108 is an active-site residue. Residue Gly-134 coordinates NADP(+). The KARI C-terminal knotted domain occupies Thr-183 to Ile-328. Residues Asp-191, Glu-195, Glu-227, and Glu-231 each coordinate Mg(2+). Ser-252 serves as a coordination point for substrate.

It belongs to the ketol-acid reductoisomerase family. Mg(2+) serves as cofactor.

The enzyme catalyses (2R)-2,3-dihydroxy-3-methylbutanoate + NADP(+) = (2S)-2-acetolactate + NADPH + H(+). It carries out the reaction (2R,3R)-2,3-dihydroxy-3-methylpentanoate + NADP(+) = (S)-2-ethyl-2-hydroxy-3-oxobutanoate + NADPH + H(+). It functions in the pathway amino-acid biosynthesis; L-isoleucine biosynthesis; L-isoleucine from 2-oxobutanoate: step 2/4. It participates in amino-acid biosynthesis; L-valine biosynthesis; L-valine from pyruvate: step 2/4. Its function is as follows. Involved in the biosynthesis of branched-chain amino acids (BCAA). Catalyzes an alkyl-migration followed by a ketol-acid reduction of (S)-2-acetolactate (S2AL) to yield (R)-2,3-dihydroxy-isovalerate. In the isomerase reaction, S2AL is rearranged via a Mg-dependent methyl migration to produce 3-hydroxy-3-methyl-2-ketobutyrate (HMKB). In the reductase reaction, this 2-ketoacid undergoes a metal-dependent reduction by NADPH to yield (R)-2,3-dihydroxy-isovalerate. This chain is Ketol-acid reductoisomerase (NADP(+)), found in Rhodopseudomonas palustris (strain BisB18).